The sequence spans 86 residues: CLAVATA3/ESR (CLE)-related protein 7 (86 aa).

The first 22 residues, 1–22 (MASKALLLFVMLTFLLVIEMEG), serve as a signal peptide directing secretion. An N-linked (GlcNAc...) asparagine glycan is attached at N46. The interval 63–86 (VDRFSPGGPDPQHHSYPLSSKPRI) is disordered. 2 positions are modified to hydroxyproline: P68 and P71. P71 is a glycosylation site (O-linked (Ara...) hydroxyproline).

This sequence belongs to the CLV3/ESR signal peptide family. The O-glycosylation (arabinosylation) of the hydroxyproline Pro-71 enhances binding affinity of the CLE7p peptide for its receptor. As to expression, expressed in roots and seedlings.

It is found in the secreted. Its subcellular location is the extracellular space. Functionally, extracellular signal peptide that regulates cell fate. The protein is CLAVATA3/ESR (CLE)-related protein 7 of Arabidopsis thaliana (Mouse-ear cress).